Reading from the N-terminus, the 485-residue chain is ATP-dependent 6-phosphofructokinase 7 (485 aa).

Residues Gly101, 164-165 (RG), and 189-192 (GDGT) each bind ATP. Asp190 is a binding site for Mg(2+). Substrate contacts are provided by residues 218-220 (TID), 263-265 (MGR), Glu319, and 374-377 (YMIR). Asp220 acts as the Proton acceptor in catalysis. The interval 449 to 485 (SFLGPKDTSEEKKELPETPLLDDGAVDIPPVTKEVTK) is disordered. Residues 455 to 464 (DTSEEKKELP) show a composition bias toward basic and acidic residues.

It belongs to the phosphofructokinase type A (PFKA) family. PPi-dependent PFK group II subfamily. Atypical ATP-dependent clade 'X' sub-subfamily. In terms of assembly, homotetramer. Mg(2+) serves as cofactor. In terms of tissue distribution, expressed in roots, leaves, stems and flowers.

The protein resides in the cytoplasm. It carries out the reaction beta-D-fructose 6-phosphate + ATP = beta-D-fructose 1,6-bisphosphate + ADP + H(+). The protein operates within carbohydrate degradation; glycolysis; D-glyceraldehyde 3-phosphate and glycerone phosphate from D-glucose: step 3/4. With respect to regulation, allosterically activated by AMP. In terms of biological role, catalyzes the phosphorylation of D-fructose 6-phosphate to fructose 1,6-bisphosphate by ATP, the first committing step of glycolysis. This Arabidopsis thaliana (Mouse-ear cress) protein is ATP-dependent 6-phosphofructokinase 7.